The sequence spans 2371 residues: MIVPETRPGPSPIAIVGIGLRLPGGCHDAQSYWDLLVHQKDARKPIPPERFNIDGFHKESDGVGSLSMRHGYFLDEPADRFDAGFFSMSQTEVARVDPQQRLLLEVMHEALENAGEVGWRGSNIAVYAGSFGQDWLQMQARDPQDGNVYGITGMDDFVLANRVSYEFDLHGPSMTVKAGCSSSLIALDLACEALQRGDCSGALVGASNLLLSPEYFLALDNLGALSSAGSSNTFDTNASGYARADAVNAVYVKRLDDALRDGNPIRAIVRSTAVNSDGKTVGLTNPSTDAQARLIRRAYEKAGIINPGETPVVECHGTGTATGDPQEVAAVVQVFSVMKLTQIPQVKPNIGHGEGAAGLSSLIKAVLSLERNTIPPNIKFTTPNPKIPFTEARLVVPTKATPWPKGRSRRISVDSFGLGGANAHVILEGYSTTPSPHRNGIPKVNGHTKTSTLQRLLVFSAHNETSIAKMTSNYQAFTESESYRVKDLAYTLGARRSHHKWRSFCITDGKSLQPTPAVRSSDPKGLLFIFTGQGAQWSDVLLNSQEISSAEYAQPLCTAIQIGLTNLLREWKITPDGVVGHSSGEIAAAYAVGALEMRDAIHVAFYRGVASSQQKRPGAMAAVGLGRHEVSNLLSAGTTIACENSRSSVTISGDYDAVEDTLDRVRQYWPDALARKLKIDRAYHSDHMRSVGILYEELISEIKTSTKSLTIPFFSSVTGQATYDASLLGPTYWRANMERPVLFLSAVENALDSMQEFGLALELGPHSALSGPFRQICKELDKRIIYNSCLSRGADATTTILTAIGQLYCQGLAPDFSALNPGGVTMSNLPPYPWTHDASYWNESRISREFRTRPHPEHELLGARVIGGNDMEPSWRKLLNLKEVAWLSDHVVAEDVVFPAAGYVAMAGEAIKQITGTAGFTIRSLSIGSAMPLNNARATEIITRLQPHRLTDDQDSTWFDFSVMSYDGNTWTRHCNGKVHPGNASTLSMEEKKSSPAEDGVRGVISAKWYQAAKAAGLEYGPTFQGLQDASYNVTRDCISSTLQTPLQTSSVLHPTTMDQLLQCCILGSVKGHLRLMSKLVLPVHIDEMYIADSHSFEGLYCETHSDFTGADMMEARGHIRVGNGSLALQAKGIRFRILENNRSKENALQELRLLEWRPSIDLVDLRQLVQQTTDLSGCLELVERLNILCVLGTTRILKSMENTQHHFKRFKEWNEEYVNNIRLNGSNVVQDTDHIFEMTSAECEFAIKELTAEALETPARDIALAITRIFYDVENIFTGAAEPLAVLLRDDLLMKIYNFFNMLDHRHFFQLLGHNKKTLRIIEIGAGTGGFTSTIVPALTDSAGGCLFSTYTYTDISSGFFKAAKERFSEYPGIEYTVLDISEDPASQGLELNSYDLVVAANAKAKWVNYIMGTLSGWWLGEPDGRINEPYIQAQQWDDILQKAGFENVTAIMDQSPPFQLDNIVIANAVDDALAPPKALSLLVPDTTQVAGPAAELVSKFQSEGYEVSLCSLWDLPTAPLDIVSLLDIMEPQTFFQGLTDRDLRGLIRFITHTHGQKLLWLTGPAQISTKDPHSAMVLGFARTLRLELGTIFATMELDIAAEPSPWNSVVEVFAKLQSQGTDDLVDCEYALVDGTVQVPRYITRSSEAVLPVASEQISRQLHVAKPGLLSSLQWQGSSREAELKEGELEIAVRASSVNYQDALLALGHVHSNHGLGLDCAGIVTHINSRAGKDNLQVGDRVLCWSAGSLSTHVRADSQRCIKIPDTLNFDVAVTMPTTYGTMIRGLIEIDAMGVAAIQIARMQGAEIYATAATEEEKHFLTTEHDIPMSRIFSSQDNSFVTAIMHDTQSRGVDIVVNSLSGELLHESWKCVAEGGNMIDISGKDVSGHGKLDMALFNGNRGFHGLDMASLVSKKPSLTRRLLEASIKLYTDGLVKPIRPITRFSTSDVKHAFHQFQGHRPIGAICIEFPDDPLSFPIDSFDDKTRFREDRSYVLIGGLGGLGRSAAVWLAERGAGSIIFMSRSASPSVESTSLVRELKALGCEVQIFTGSVTDASAVENLVANAAKPIAGMLHLALVLKDEAVLDMTFDSWQGATEAKVQGTWNLHNALKDQPLDFFILLSSIYGVQGNPKQANYAAASTFLDAFVQFRQQLGLPASVIDLGVMEDIGFVSQHPTILENLRRAGAQLIRENDFIGALQLAVRASSQPAPAPPTLASGYVNRAQFVVGLGQHPPDARGLGLKVDGTIQGQNNTQAVAKEDGDALKQFMENATRDPSSLEDETAVAEFLAAQVAECLKTLLIFSDSSDLNLKLGLAELGVDSLIAIELQTWWIQNFATNVTILELTKSASVMDLGKLARSRILEELHGRDG.

Residues Pro-10–Gly-429 form the Ketosynthase family 3 (KS3) domain. Active-site for beta-ketoacyl synthase activity residues include Cys-180, His-316, and His-352. The interval Phe-528–Ala-796 is malonyl-CoA:ACP transacylase (MAT) domain. The interval His-858–Thr-986 is N-terminal hotdog fold. Positions His-858–Asn-1142 are dehydratase (DH) domain. The PKS/mFAS DH domain occupies His-858–Lys-1145. His-890 functions as the Proton acceptor; for dehydratase activity in the catalytic mechanism. A C-terminal hotdog fold region spans residues Val-1001–Lys-1145. Asp-1059 functions as the Proton donor; for dehydratase activity in the catalytic mechanism. The interval Phe-1309–Gln-1456 is methyltransferase (CMet) domain. Positions Gly-1669–Ile-1968 are enoyl reductase (ER) (ER) domain. The ketoreductase (KR) domain stretch occupies residues Ser-1993–Glu-2167. The 83-residue stretch at Glu-2280 to Ile-2362 folds into the Carrier domain. Ser-2322 is subject to O-(pantetheine 4'-phosphoryl)serine.

It participates in secondary metabolite biosynthesis; terpenoid biosynthesis. Functionally, highly reducing polyketide synthase; part of the gene cluster that mediates the biosynthesis of the meroterpenoids nectripenoids A and B, as well as cochliquninone D and isocochliquninone E. The pathway probably begins with the HR-PKS ntnH that catalyzes two chain-extension steps to form a reduced triketide, which then primes the SAT domain in the NR-PKS ntnG to initiate three more cycles of extension to give a linear hexaketide corresponding to the polyketide part of nectripenoids. The FAD-dependent monooxygenase ntnJ then performs an oxidative decarboxylation at C11 of the ntnH/ntnG product, via an electrophilic aromatic hydroxylation with concomitant ipso-decarboxylation. The membrane-bound polyprenyl transferase ntnF then introduces a farnesyl group before the FAD-dependent monooxygenase ntnK functions as the first epoxidase on terminal C12'-C13' olefin, followed by a second epoxidation on C7'-C8' catalyzed by ntnA. The terpene cyclase/mutase ntnI then initiates the sequential tricyclic ring formation through protonation of the terminal epoxide and catalyzes the regioselective and stereoselective 6/6/6-tricyclic ring formation. The cytochrome P450 monooxygenase ntnM may then hydroxylate C1'. The polypeptide is Highly reducing polyketide synthase ntnH (Nectria sp).